The primary structure comprises 260 residues: Exosome complex component Rrp4 (260 aa).

The 70-residue stretch at 59-128 folds into the S1 motif domain; sequence NDVVIGIVIV…SSMKVELALR (70 aa). The KH domain maps to 136-194; it reads KTGQIIKVESVKVPRVIGHGGSMISMLKKETNCSIFVGQNGRIWIDGKDEDIELLSKAL.

This sequence belongs to the RRP4 family. In terms of assembly, component of the archaeal exosome complex. Forms a trimer of Rrp4 and/or Csl4 subunits. The trimer associates with a hexameric ring-like arrangement composed of 3 Rrp41-Rrp42 heterodimers.

The protein resides in the cytoplasm. Its function is as follows. Non-catalytic component of the exosome, which is a complex involved in RNA degradation. Increases the RNA binding and the efficiency of RNA degradation. Confers strong poly(A) specificity to the exosome. The protein is Exosome complex component Rrp4 of Methanosarcina acetivorans (strain ATCC 35395 / DSM 2834 / JCM 12185 / C2A).